The chain runs to 61 residues: Small ribosomal subunit protein uS14 (61 aa).

Residues Cys24, Cys27, Cys40, and Cys43 each contribute to the Zn(2+) site.

It belongs to the universal ribosomal protein uS14 family. Zinc-binding uS14 subfamily. As to quaternary structure, part of the 30S ribosomal subunit. Contacts proteins S3 and S10. Zn(2+) serves as cofactor.

Binds 16S rRNA, required for the assembly of 30S particles and may also be responsible for determining the conformation of the 16S rRNA at the A site. The chain is Small ribosomal subunit protein uS14 from Borreliella burgdorferi (strain ATCC 35210 / DSM 4680 / CIP 102532 / B31) (Borrelia burgdorferi).